A 172-amino-acid chain; its full sequence is Large ribosomal subunit protein bL21m (172 aa).

The transit peptide at M1–N20 directs the protein to the mitochondrion.

Belongs to the bacterial ribosomal protein bL21 family.

The protein resides in the mitochondrion. This chain is Large ribosomal subunit protein bL21m (mrpl21), found in Dictyostelium discoideum (Social amoeba).